The primary structure comprises 599 residues: Calcium-dependent protein kinase 10 (599 aa).

G2 carries the N-myristoyl glycine lipid modification. The segment at 27 to 110 (RQDGDDALPG…PRPRVPPVKR (84 aa)) is disordered. The span at 74–84 (VSTTDTASAEQ) shows a compositional bias: polar residues. The segment covering 87–98 (SKSSAGSDSGEA) has biased composition (low complexity). Residues 133 to 391 (YSLGRKLGQG…AHEVLRHPWV (259 aa)) enclose the Protein kinase domain. Residues 139 to 147 (LGQGQFGTT) and K162 contribute to the ATP site. The active-site Proton acceptor is the D257. Positions 397-427 (APDKPLDSAVLSRMKQFSAMNKLKKMALRVI) are autoinhibitory domain. EF-hand domains follow at residues 434–469 (DEIA…VGAN), 470–505 (LQES…MNKI), 506–541 (ERED…FGLG), and 544–575 (QLEE…PTMG). The Ca(2+) site is built by D447, D449, S451, Q453, E458, D483, D485, S487, T489, E494, D519, D521, S523, Y525, E530, D553, D555, D557, R559, and E564.

The protein belongs to the protein kinase superfamily. Ser/Thr protein kinase family. CDPK subfamily. In terms of tissue distribution, expressed in roots.

It localises to the membrane. It carries out the reaction L-seryl-[protein] + ATP = O-phospho-L-seryl-[protein] + ADP + H(+). The enzyme catalyses L-threonyl-[protein] + ATP = O-phospho-L-threonyl-[protein] + ADP + H(+). With respect to regulation, activated by calcium. Autophosphorylation may play an important role in the regulation of the kinase activity. May play a role in signal transduction pathways that involve calcium as a second messenger. In Oryza sativa subsp. japonica (Rice), this protein is Calcium-dependent protein kinase 10.